Consider the following 399-residue polypeptide: Argininosuccinate synthase (399 aa).

Residue 9 to 17 (AYSGGLDTS) participates in ATP binding. Tyr88 is a binding site for L-citrulline. Gly118 contacts ATP. The L-aspartate site is built by Thr120, Asn124, and Asp125. Asn124 is a binding site for L-citrulline. L-citrulline is bound by residues Arg128, Ser176, Glu261, and Tyr273.

This sequence belongs to the argininosuccinate synthase family. Type 1 subfamily. Homotetramer.

It is found in the cytoplasm. The catalysed reaction is L-citrulline + L-aspartate + ATP = 2-(N(omega)-L-arginino)succinate + AMP + diphosphate + H(+). The protein operates within amino-acid biosynthesis; L-arginine biosynthesis; L-arginine from L-ornithine and carbamoyl phosphate: step 2/3. In Mycobacterium leprae (strain TN), this protein is Argininosuccinate synthase.